The following is a 423-amino-acid chain: Replication factor C large subunit (423 aa).

50–57 (GPAGCGKT) serves as a coordination point for ATP.

The protein belongs to the activator 1 small subunits family. RfcL subfamily. As to quaternary structure, heteromultimer composed of small subunits (RfcS) and large subunits (RfcL).

Part of the RFC clamp loader complex which loads the PCNA sliding clamp onto DNA. The polypeptide is Replication factor C large subunit (Staphylothermus marinus (strain ATCC 43588 / DSM 3639 / JCM 9404 / F1)).